The following is a 204-amino-acid chain: Linker for activation of T-cells family member 2 (204 aa).

Residues 1-7 lie on the Extracellular side of the membrane; it reads MNAELEL. Residues 8–28 traverse the membrane as a helical; Signal-anchor for type III membrane protein segment; the sequence is LWPLSGLLLLLLLGTTAWLCV. 2 S-palmitoyl cysteine lipidation sites follow: Cys-27 and Cys-30. Over 29–204 the chain is Cytoplasmic; sequence QCSRPGVKRN…NGDVATTEKI (176 aa). Tyr-60 carries the phosphotyrosine modification. Ser-61 and Ser-96 each carry phosphoserine. 3 positions are modified to phosphotyrosine: Tyr-140, Tyr-161, and Tyr-193. The disordered stretch occupies residues 147 to 204; the sequence is KPSTPESGTEESEDYQNSVSILQWRESKRTMGARTSPSGSPDEEPDYVNGDVATTEKI.

As to quaternary structure, when phosphorylated, interacts with GRB2. May also interact with SOS1, GAB1 and CBL. Phosphorylated on tyrosines following cross-linking of BCR in B-cells, high affinity IgG receptor (FCGR1) in myeloid cells, or high affinity IgE receptor (FCER1) in mast cells; which induces the recruitment of GRB2.

Its subcellular location is the cell membrane. Its function is as follows. Involved in FCER1 (high affinity immunoglobulin epsilon receptor)-mediated signaling in mast cells. May also be involved in BCR (B-cell antigen receptor)-mediated signaling in B-cells and FCGR1 (high affinity immunoglobulin gamma Fc receptor I)-mediated signaling in myeloid cells. Couples activation of these receptors and their associated kinases with distal intracellular events through the recruitment of GRB2. This chain is Linker for activation of T-cells family member 2 (Lat2), found in Rattus norvegicus (Rat).